A 40-amino-acid chain; its full sequence is Muscarinic m1-toxin4 (40 aa).

A disulfide bridge connects residues cysteine 3 and cysteine 24.

It belongs to the three-finger toxin family. Short-chain subfamily. Aminergic toxin sub-subfamily. In terms of assembly, monomer. In terms of processing, contains 4 disulfide bonds. Expressed by the venom gland.

Its subcellular location is the secreted. In terms of biological role, binds irreversibly and specifically to M1 (CHRM1) muscarinic acetylcholine receptors, blocking further binding of antagonists and preventing the action of agonists. In Dendroaspis angusticeps (Eastern green mamba), this protein is Muscarinic m1-toxin4.